Here is a 123-residue protein sequence, read N- to C-terminus: Large ribosomal subunit protein uL14c (123 aa).

The protein belongs to the universal ribosomal protein uL14 family. In terms of assembly, part of the 50S ribosomal subunit. Interacts with IOJAP.

The protein localises to the plastid. The protein resides in the chloroplast. Functionally, binds to 23S rRNA. The protein is Large ribosomal subunit protein uL14c of Zea mays (Maize).